The chain runs to 135 residues: Large ribosomal subunit protein eL27z (135 aa).

Belongs to the eukaryotic ribosomal protein eL27 family.

The sequence is that of Large ribosomal subunit protein eL27z (RPL27A) from Arabidopsis thaliana (Mouse-ear cress).